The chain runs to 183 residues: Dual specificity protein phosphatase 22-B (183 aa).

A Tyrosine-protein phosphatase domain is found at 4-144; that stretch reads GINKVLPDLY…LQEFQTGELQ (141 aa). Catalysis depends on Cys-88, which acts as the Phosphocysteine intermediate.

The protein belongs to the protein-tyrosine phosphatase family. Non-receptor class dual specificity subfamily.

It is found in the cytoplasm. The protein resides in the nucleus. It catalyses the reaction O-phospho-L-tyrosyl-[protein] + H2O = L-tyrosyl-[protein] + phosphate. The catalysed reaction is O-phospho-L-seryl-[protein] + H2O = L-seryl-[protein] + phosphate. The enzyme catalyses O-phospho-L-threonyl-[protein] + H2O = L-threonyl-[protein] + phosphate. Its function is as follows. Activates the Jnk signaling pathway. Dephosphorylates and deactivates p38 and stress-activated protein kinase/c-Jun N-terminal kinase (SAPK/JNK). The protein is Dual specificity protein phosphatase 22-B (dusp22b) of Danio rerio (Zebrafish).